Consider the following 448-residue polypeptide: Trigger factor (448 aa).

The region spanning 172–257 (GDRVTVDFVG…MKKIEWPHLP (86 aa)) is the PPIase FKBP-type domain.

Belongs to the FKBP-type PPIase family. Tig subfamily.

Its subcellular location is the cytoplasm. The enzyme catalyses [protein]-peptidylproline (omega=180) = [protein]-peptidylproline (omega=0). Functionally, involved in protein export. Acts as a chaperone by maintaining the newly synthesized protein in an open conformation. Functions as a peptidyl-prolyl cis-trans isomerase. In Burkholderia cenocepacia (strain HI2424), this protein is Trigger factor.